We begin with the raw amino-acid sequence, 437 residues long: Protein translocase subunit SecY (437 aa).

10 helical membrane passes run 19-39 (LFTL…APGV), 68-88 (LLQI…SIIL), 121-141 (VALA…GALF), 156-176 (IFTT…VMWL), 188-208 (GMSI…LWAI), 218-238 (WIEF…VVFV), 274-294 (GVIP…IVQF), 317-337 (YIAT…AISF), 378-398 (SLYL…FGGA), and 400-420 (QNFP…LETV).

It belongs to the SecY/SEC61-alpha family. In terms of assembly, component of the Sec protein translocase complex. Heterotrimer consisting of SecY, SecE and SecG subunits. The heterotrimers can form oligomers, although 1 heterotrimer is thought to be able to translocate proteins. Interacts with the ribosome. Interacts with SecDF, and other proteins may be involved. Interacts with SecA.

The protein localises to the cell membrane. Its function is as follows. The central subunit of the protein translocation channel SecYEG. Consists of two halves formed by TMs 1-5 and 6-10. These two domains form a lateral gate at the front which open onto the bilayer between TMs 2 and 7, and are clamped together by SecE at the back. The channel is closed by both a pore ring composed of hydrophobic SecY resides and a short helix (helix 2A) on the extracellular side of the membrane which forms a plug. The plug probably moves laterally to allow the channel to open. The ring and the pore may move independently. The chain is Protein translocase subunit SecY from Streptomyces griseus.